Here is a 300-residue protein sequence, read N- to C-terminus: uncharacterized protein (300 aa).

Positions 1–19 (MKLKLLLIPLLGSSLLLSA) are cleaved as a signal peptide. Cys20 is lipidated: N-palmitoyl cysteine. Cys20 is lipidated: S-diacylglycerol cysteine.

It belongs to the MG439/MG440 family.

Its subcellular location is the cell membrane. This is an uncharacterized protein from Mycoplasma pneumoniae (strain ATCC 29342 / M129 / Subtype 1) (Mycoplasmoides pneumoniae).